Here is a 322-residue protein sequence, read N- to C-terminus: Malate dehydrogenase (322 aa).

Residues 10–15 (GSGQIG) and Asp34 contribute to the NAD(+) site. 2 residues coordinate substrate: Arg83 and Arg89. NAD(+) contacts are provided by residues Asn96 and 119–121 (ITN). Residues Asn121 and Arg152 each contribute to the substrate site. The Proton acceptor role is filled by His176.

This sequence belongs to the LDH/MDH superfamily. MDH type 3 family.

The enzyme catalyses (S)-malate + NAD(+) = oxaloacetate + NADH + H(+). Its function is as follows. Catalyzes the reversible oxidation of malate to oxaloacetate. The sequence is that of Malate dehydrogenase from Bradyrhizobium diazoefficiens (strain JCM 10833 / BCRC 13528 / IAM 13628 / NBRC 14792 / USDA 110).